A 261-amino-acid polypeptide reads, in one-letter code: Taurine import ATP-binding protein TauB (261 aa).

In terms of domain architecture, ABC transporter spans leucine 4–alanine 233. Glycine 38–threonine 45 is a binding site for ATP.

The protein belongs to the ABC transporter superfamily. Taurine importer (TC 3.A.1.17.1) family. As to quaternary structure, the complex is composed of two ATP-binding proteins (TauB), two transmembrane proteins (TauC) and a solute-binding protein (TauA).

The protein resides in the cell inner membrane. The enzyme catalyses taurine(out) + ATP + H2O = taurine(in) + ADP + phosphate + H(+). Part of the ABC transporter complex TauABC involved in taurine import. Responsible for energy coupling to the transport system. This chain is Taurine import ATP-binding protein TauB, found in Chromobacterium violaceum (strain ATCC 12472 / DSM 30191 / JCM 1249 / CCUG 213 / NBRC 12614 / NCIMB 9131 / NCTC 9757 / MK).